A 325-amino-acid polypeptide reads, in one-letter code: GMP reductase (325 aa).

The active-site Thioimidate intermediate is C173. 202 to 225 (IIADGGIRDHGDIAKSVRFGASMV) provides a ligand contact to NADP(+).

Belongs to the IMPDH/GMPR family. GuaC type 2 subfamily.

It catalyses the reaction IMP + NH4(+) + NADP(+) = GMP + NADPH + 2 H(+). Catalyzes the irreversible NADPH-dependent deamination of GMP to IMP. It functions in the conversion of nucleobase, nucleoside and nucleotide derivatives of G to A nucleotides, and in maintaining the intracellular balance of A and G nucleotides. This chain is GMP reductase, found in Variovorax paradoxus (strain S110).